The sequence spans 473 residues: Photosystem II CP43 reaction center protein (473 aa).

Residues 1–14 constitute a propeptide that is removed on maturation; it reads MKTLYSLRRFYPVE. The residue at position 15 (Thr15) is an N-acetylthreonine. At Thr15 the chain carries Phosphothreonine. 5 helical membrane passes run 69–93, 134–155, 178–200, 255–275, and 291–312; these read LFEV…PHLA, LLGP…KDRN, KALS…RKIT, KPFA…LSYS, and WFNN…ASQA. A [CaMn4O5] cluster-binding site is contributed by Glu367. A helical membrane pass occupies residues 447–471; it reads RARAAAAGFEKGIDRDFEPVLSMTP.

This sequence belongs to the PsbB/PsbC family. PsbC subfamily. PSII is composed of 1 copy each of membrane proteins PsbA, PsbB, PsbC, PsbD, PsbE, PsbF, PsbH, PsbI, PsbJ, PsbK, PsbL, PsbM, PsbT, PsbX, PsbY, PsbZ, Psb30/Ycf12, at least 3 peripheral proteins of the oxygen-evolving complex and a large number of cofactors. It forms dimeric complexes. It depends on Binds multiple chlorophylls and provides some of the ligands for the Ca-4Mn-5O cluster of the oxygen-evolving complex. It may also provide a ligand for a Cl- that is required for oxygen evolution. PSII binds additional chlorophylls, carotenoids and specific lipids. as a cofactor.

The protein resides in the plastid. It localises to the chloroplast thylakoid membrane. Its function is as follows. One of the components of the core complex of photosystem II (PSII). It binds chlorophyll and helps catalyze the primary light-induced photochemical processes of PSII. PSII is a light-driven water:plastoquinone oxidoreductase, using light energy to abstract electrons from H(2)O, generating O(2) and a proton gradient subsequently used for ATP formation. The protein is Photosystem II CP43 reaction center protein of Pelargonium hortorum (Common geranium).